The following is a 224-amino-acid chain: tRNA (guanine-N(7)-)-methyltransferase (224 aa).

Residues Glu-45, Glu-70, Asp-97, and Asp-119 each contribute to the S-adenosyl-L-methionine site. Asp-119 is a catalytic residue. Residues Lys-123, Asp-155, and 199–202 (TEYE) contribute to the substrate site.

The protein belongs to the class I-like SAM-binding methyltransferase superfamily. TrmB family.

The enzyme catalyses guanosine(46) in tRNA + S-adenosyl-L-methionine = N(7)-methylguanosine(46) in tRNA + S-adenosyl-L-homocysteine. It functions in the pathway tRNA modification; N(7)-methylguanine-tRNA biosynthesis. Catalyzes the formation of N(7)-methylguanine at position 46 (m7G46) in tRNA. This Ureaplasma urealyticum serovar 10 (strain ATCC 33699 / Western) protein is tRNA (guanine-N(7)-)-methyltransferase.